The following is a 101-amino-acid chain: Ribonuclease kappa-A (101 aa).

The next 2 helical transmembrane spans lie at Ala-13–Phe-33 and Val-68–Cys-88.

The protein belongs to the RNase K family.

The protein resides in the membrane. Its function is as follows. Endoribonuclease which preferentially cleaves ApU and ApG phosphodiester bonds. The polypeptide is Ribonuclease kappa-A (rnasek-a) (Xenopus laevis (African clawed frog)).